The following is a 403-amino-acid chain: Tryptophan synthase beta chain (403 aa).

K87 is modified (N6-(pyridoxal phosphate)lysine).

This sequence belongs to the TrpB family. In terms of assembly, tetramer of two alpha and two beta chains. Requires pyridoxal 5'-phosphate as cofactor.

It catalyses the reaction (1S,2R)-1-C-(indol-3-yl)glycerol 3-phosphate + L-serine = D-glyceraldehyde 3-phosphate + L-tryptophan + H2O. It functions in the pathway amino-acid biosynthesis; L-tryptophan biosynthesis; L-tryptophan from chorismate: step 5/5. The beta subunit is responsible for the synthesis of L-tryptophan from indole and L-serine. In Shewanella loihica (strain ATCC BAA-1088 / PV-4), this protein is Tryptophan synthase beta chain.